The following is a 365-amino-acid chain: Homeobox protein knotted-1-like 7 (365 aa).

The segment covering 1–11 (MEELEGHRGEG) has biased composition (basic and acidic residues). The interval 1–20 (MEELEGHRGEGRLPPPPPLL) is disordered. An ELK domain is found at 227 to 247 (ALKRHLLRKYSGYLGGLRKEL). A DNA-binding region (homeobox; TALE-type) is located at residues 248 to 311 (SKKRKKGKLP…NQRKRHWKPT (64 aa)).

The protein belongs to the TALE/KNOX homeobox family.

The protein resides in the nucleus. Functionally, probable transcription factor that may be involved in shoot formation during embryogenesis. This is Homeobox protein knotted-1-like 7 (OSH3) from Oryza sativa subsp. japonica (Rice).